The chain runs to 315 residues: Serine/threonine-protein phosphatase PP2A catalytic subunit 2 (315 aa).

4 residues coordinate Mn(2+): Asp62, His64, Asp90, and Asn122. His123 (proton donor) is an active-site residue. Residues His172 and His247 each coordinate Mn(2+). The tract at residues 294 to 315 is disordered; it reads QFEPAPRENEPHTTRRVPDYFL. Positions 298–315 are enriched in basic and acidic residues; that stretch reads APRENEPHTTRRVPDYFL. A Leucine methyl ester modification is found at Leu315.

The protein belongs to the PPP phosphatase family. PP-2A subfamily. Mn(2+) is required as a cofactor. Post-translationally, reversibly methyl esterified on Leu-315 by leucine carboxyl methyltransferase 1 (PPM1) and protein phosphatase methylesterase 1 (PPE1). Carboxyl methylation influences the affinity of the catalytic subunit for the different regulatory subunits, thereby modulating the PP2A holoenzyme's substrate specificity, enzyme activity and cellular localization.

The enzyme catalyses O-phospho-L-seryl-[protein] + H2O = L-seryl-[protein] + phosphate. It carries out the reaction O-phospho-L-threonyl-[protein] + H2O = L-threonyl-[protein] + phosphate. The chain is Serine/threonine-protein phosphatase PP2A catalytic subunit 2 (Ppn2) from Paramecium tetraurelia.